We begin with the raw amino-acid sequence, 837 residues long: Protein translocase subunit SecA (837 aa).

ATP contacts are provided by residues glutamine 85, 103–107, and aspartate 493; that span reads GEGKT. 4 residues coordinate Zn(2+): cysteine 821, cysteine 823, cysteine 832, and histidine 833.

This sequence belongs to the SecA family. Monomer and homodimer. Part of the essential Sec protein translocation apparatus which comprises SecA, SecYEG and auxiliary proteins SecDF. Other proteins may also be involved. It depends on Zn(2+) as a cofactor.

It is found in the cell membrane. Its subcellular location is the cytoplasm. The enzyme catalyses ATP + H2O + cellular proteinSide 1 = ADP + phosphate + cellular proteinSide 2.. In terms of biological role, part of the Sec protein translocase complex. Interacts with the SecYEG preprotein conducting channel. Has a central role in coupling the hydrolysis of ATP to the transfer of proteins into and across the cell membrane, serving as an ATP-driven molecular motor driving the stepwise translocation of polypeptide chains across the membrane. The chain is Protein translocase subunit SecA from Streptococcus pneumoniae (strain ATCC BAA-255 / R6).